The chain runs to 364 residues: Biotin synthase (364 aa).

Residues D14–P36 form a disordered region. One can recognise a Radical SAM core domain in the interval R70–R308. Residues C88, C92, and C95 each coordinate [4Fe-4S] cluster. 2 residues coordinate [2Fe-2S] cluster: C164 and C233.

Belongs to the radical SAM superfamily. Biotin synthase family. Homodimer. [4Fe-4S] cluster serves as cofactor. [2Fe-2S] cluster is required as a cofactor.

It catalyses the reaction (4R,5S)-dethiobiotin + (sulfur carrier)-SH + 2 reduced [2Fe-2S]-[ferredoxin] + 2 S-adenosyl-L-methionine = (sulfur carrier)-H + biotin + 2 5'-deoxyadenosine + 2 L-methionine + 2 oxidized [2Fe-2S]-[ferredoxin]. The protein operates within cofactor biosynthesis; biotin biosynthesis; biotin from 7,8-diaminononanoate: step 2/2. In terms of biological role, catalyzes the conversion of dethiobiotin (DTB) to biotin by the insertion of a sulfur atom into dethiobiotin via a radical-based mechanism. This is Biotin synthase from Nitratidesulfovibrio vulgaris (strain DSM 19637 / Miyazaki F) (Desulfovibrio vulgaris).